The following is a 515-amino-acid chain: Glucose-6-phosphate 1-dehydrogenase (515 aa).

Ala-2 bears the N-acetylalanine mark. Phosphoserine is present on Ser-8. A Phosphothreonine modification is found at Thr-10. NADP(+) is bound by residues 38 to 45 (GASGDLAK) and Arg-72. The residue at position 89 (Lys-89) is an N6-acetyllysine. Residues Tyr-147 and Lys-171 each coordinate NADP(+). Residues Lys-171, 201-205 (HYLGK), Glu-239, and Asp-258 contribute to the D-glucose 6-phosphate site. Lys-171 carries the N6-(2-hydroxyisobutyryl)lysine; alternate modification. An N6-acetyllysine; alternate modification is found at Lys-171. Residue His-263 is the Proton acceptor of the active site. Arg-357 lines the NADP(+) pocket. D-glucose 6-phosphate-binding residues include Lys-360 and Arg-365. NADP(+) contacts are provided by Lys-366, Arg-370, and Arg-393. A D-glucose 6-phosphate-binding site is contributed by Gln-395. Residues 401-403 (YTK) and 421-423 (DLT) contribute to the NADP(+) site. At Lys-403 the chain carries N6-acetyllysine. An N6-acetyllysine modification is found at Lys-432. Arg-487 is a binding site for NADP(+). Residue Lys-497 is modified to N6-acetyllysine. Tyr-503 and Trp-509 together coordinate NADP(+). Tyr-503 carries the post-translational modification Phosphotyrosine.

It belongs to the glucose-6-phosphate dehydrogenase family. Homotetramer; dimer of dimers. Interacts with SIRT2; the interaction is enhanced by H(2)O(2) treatment. Forms a ternary complex with ALDOB and TP53; this interaction is direct. ALDOB stabilizes the complex inhibiting G6PD activity and keeping oxidative pentose phosphate metabolism in check. Acetylated by ELP3 at Lys-403; acetylation inhibits its homodimerization and enzyme activity. Deacetylated by SIRT2 at Lys-403; deacetylation stimulates its enzyme activity.

Its subcellular location is the cytoplasm. The protein resides in the cytosol. The protein localises to the membrane. The catalysed reaction is D-glucose 6-phosphate + NADP(+) = 6-phospho-D-glucono-1,5-lactone + NADPH + H(+). It functions in the pathway carbohydrate degradation; pentose phosphate pathway; D-ribulose 5-phosphate from D-glucose 6-phosphate (oxidative stage): step 1/3. Functionally, cytosolic glucose-6-phosphate dehydrogenase that catalyzes the first and rate-limiting step of the oxidative branch within the pentose phosphate pathway/shunt, an alternative route to glycolysis for the dissimilation of carbohydrates and a major source of reducing power and metabolic intermediates for fatty acid and nucleic acid biosynthetic processes. This is Glucose-6-phosphate 1-dehydrogenase (G6pdx) from Rattus norvegicus (Rat).